The chain runs to 247 residues: Putative urease accessory protein UreD homolog (247 aa).

The protein belongs to the UreD family. As to quaternary structure, ureD, UreF and UreG form a complex that acts as a GTP-hydrolysis-dependent molecular chaperone, activating the urease apoprotein by helping to assemble the nickel containing metallocenter of UreC. The UreE protein probably delivers the nickel.

It is found in the cytoplasm. Functionally, required for maturation of urease via the functional incorporation of the urease nickel metallocenter. The protein is Putative urease accessory protein UreD homolog of Escherichia coli O157:H7.